The sequence spans 669 residues: Galactocerebrosidase (669 aa).

A signal peptide spans 1-26; the sequence is MTAAAGSAGHAAVPLLLCALLVPGGA. Residues Thr93, Trp135, and Asn181 each contribute to the substrate site. Glu182 serves as the catalytic Proton donor/acceptor. The Nucleophile role is filled by Glu258. Cys271 and Cys378 are disulfide-bonded. The N-linked (GlcNAc...) asparagine glycan is linked to Asn363. Arg380 contributes to the substrate binding site. 3 N-linked (GlcNAc...) asparagine glycosylation sites follow: Asn387, Asn543, and Asn586.

This sequence belongs to the glycosyl hydrolase 59 family.

Its subcellular location is the lysosome. The catalysed reaction is a beta-D-galactosyl-(1&lt;-&gt;1')-N-acylsphing-4-enine + H2O = an N-acylsphing-4-enine + D-galactose. The enzyme catalyses beta-D-galactosyl-(1&lt;-&gt;1)-sphing-4-enine + H2O = sphing-4-enine + D-galactose. It catalyses the reaction a D-galactosylceramide + H2O = an N-acyl-sphingoid base + D-galactose. Its function is as follows. Hydrolyzes the galactose ester bonds of glycolipids such as galactosylceramide and galactosylsphingosine. Enzyme with very low activity responsible for the lysosomal catabolism of galactosylceramide, a major lipid in myelin, kidney and epithelial cells of small intestine and colon. The chain is Galactocerebrosidase from Canis lupus familiaris (Dog).